The primary structure comprises 147 residues: Prefoldin subunit alpha (147 aa).

It belongs to the prefoldin alpha subunit family. As to quaternary structure, heterohexamer of two alpha and four beta subunits.

The protein localises to the cytoplasm. In terms of biological role, molecular chaperone capable of stabilizing a range of proteins. Seems to fulfill an ATP-independent, HSP70-like function in archaeal de novo protein folding. The protein is Prefoldin subunit alpha of Saccharolobus islandicus (strain L.S.2.15 / Lassen #1) (Sulfolobus islandicus).